A 233-amino-acid chain; its full sequence is 5'-methylthioadenosine/S-adenosylhomocysteine nucleosidase (233 aa).

Glu-12 acts as the Proton acceptor in catalysis. Substrate-binding positions include Gly-78, Ile-156, and 177-178; that span reads ME. The active-site Proton donor is Asp-201.

The protein belongs to the PNP/UDP phosphorylase family. MtnN subfamily.

The enzyme catalyses S-adenosyl-L-homocysteine + H2O = S-(5-deoxy-D-ribos-5-yl)-L-homocysteine + adenine. It catalyses the reaction S-methyl-5'-thioadenosine + H2O = 5-(methylsulfanyl)-D-ribose + adenine. It carries out the reaction 5'-deoxyadenosine + H2O = 5-deoxy-D-ribose + adenine. It participates in amino-acid biosynthesis; L-methionine biosynthesis via salvage pathway; S-methyl-5-thio-alpha-D-ribose 1-phosphate from S-methyl-5'-thioadenosine (hydrolase route): step 1/2. In terms of biological role, catalyzes the irreversible cleavage of the glycosidic bond in both 5'-methylthioadenosine (MTA) and S-adenosylhomocysteine (SAH/AdoHcy) to adenine and the corresponding thioribose, 5'-methylthioribose and S-ribosylhomocysteine, respectively. Also cleaves 5'-deoxyadenosine, a toxic by-product of radical S-adenosylmethionine (SAM) enzymes, into 5-deoxyribose and adenine. The polypeptide is 5'-methylthioadenosine/S-adenosylhomocysteine nucleosidase (Listeria monocytogenes serovar 1/2a (strain ATCC BAA-679 / EGD-e)).